We begin with the raw amino-acid sequence, 129 residues long: Fluoride-specific ion channel FluC (129 aa).

Helical transmembrane passes span 6-26 (ILAI…FNGI), 35-55 (IPFG…ILIA), 73-93 (TGVL…FLLL), and 98-118 (IALA…MAGG). G77 and T80 together coordinate Na(+).

Belongs to the fluoride channel Fluc/FEX (TC 1.A.43) family.

It localises to the cell inner membrane. The enzyme catalyses fluoride(in) = fluoride(out). Its activity is regulated as follows. Na(+) is not transported, but it plays an essential structural role and its presence is essential for fluoride channel function. Fluoride-specific ion channel. Important for reducing fluoride concentration in the cell, thus reducing its toxicity. This chain is Fluoride-specific ion channel FluC, found in Sulfurimonas denitrificans (strain ATCC 33889 / DSM 1251) (Thiomicrospira denitrificans (strain ATCC 33889 / DSM 1251)).